We begin with the raw amino-acid sequence, 668 residues long: tRNA 5-methylaminomethyl-2-thiouridine biosynthesis bifunctional protein MnmC (668 aa).

The interval 1–245 is tRNA (mnm(5)s(2)U34)-methyltransferase; sequence MKHYSIQPAN…KREMLCGVME (245 aa). The interval 270–668 is FAD-dependent cmnm(5)s(2)U34 oxidoreductase; that stretch reads IGGGIASALL…LLKGKAVKAG (399 aa).

It in the N-terminal section; belongs to the methyltransferase superfamily. tRNA (mnm(5)s(2)U34)-methyltransferase family. The protein in the C-terminal section; belongs to the DAO family. FAD is required as a cofactor.

It is found in the cytoplasm. The catalysed reaction is 5-aminomethyl-2-thiouridine(34) in tRNA + S-adenosyl-L-methionine = 5-methylaminomethyl-2-thiouridine(34) in tRNA + S-adenosyl-L-homocysteine + H(+). Functionally, catalyzes the last two steps in the biosynthesis of 5-methylaminomethyl-2-thiouridine (mnm(5)s(2)U) at the wobble position (U34) in tRNA. Catalyzes the FAD-dependent demodification of cmnm(5)s(2)U34 to nm(5)s(2)U34, followed by the transfer of a methyl group from S-adenosyl-L-methionine to nm(5)s(2)U34, to form mnm(5)s(2)U34. In Escherichia coli (strain UTI89 / UPEC), this protein is tRNA 5-methylaminomethyl-2-thiouridine biosynthesis bifunctional protein MnmC.